Reading from the N-terminus, the 348-residue chain is Protein pelota homolog (348 aa).

The protein belongs to the eukaryotic release factor 1 family. Pelota subfamily. In terms of assembly, monomer. A divalent metal cation serves as cofactor.

It localises to the cytoplasm. Functionally, may function in recognizing stalled ribosomes, interact with stem-loop structures in stalled mRNA molecules, and effect endonucleolytic cleavage of the mRNA. May play a role in the release non-functional ribosomes and degradation of damaged mRNAs. Has endoribonuclease activity. This is Protein pelota homolog from Methanococcus maripaludis (strain C5 / ATCC BAA-1333).